A 628-amino-acid polypeptide reads, in one-letter code: ATP-dependent zinc metalloprotease FtsH (628 aa).

At 1 to 7 the chain is on the stromal side; sequence MKLSWKT. The helical transmembrane segment at 8–28 threads the bilayer; it reads LLLWSLPIFVIGFFFWQGFLG. Residues 29–118 are Lumenal-facing; that stretch reads PTTTDVGSNI…AHPPKSTSAV (90 aa). The chain crosses the membrane as a helical span at residues 119 to 139; that stretch reads WGLLGNLLFPLLLVGGLAFLF. The Stromal segment spans residues 140–628; that stretch reads RRSNNASGGP…PEKNYYISQF (489 aa). Position 213 to 220 (213 to 220) interacts with ATP; that stretch reads GPPGTGKT. Residue His-434 coordinates Zn(2+). Residue Glu-435 is part of the active site. Zn(2+) contacts are provided by His-438 and Asp-512.

In the central section; belongs to the AAA ATPase family. This sequence in the C-terminal section; belongs to the peptidase M41 family. As to quaternary structure, homohexamer. The cofactor is Zn(2+).

The protein resides in the plastid. It is found in the chloroplast thylakoid membrane. Acts as a processive, ATP-dependent zinc metallopeptidase. The sequence is that of ATP-dependent zinc metalloprotease FtsH from Pyropia yezoensis (Susabi-nori).